We begin with the raw amino-acid sequence, 360 residues long: Phospho-N-acetylmuramoyl-pentapeptide-transferase (360 aa).

The next 10 helical transmembrane spans lie at 26-46 (AILGLMTALMFSLWWGPKMIA), 73-93 (TMGGLLILAGVFISVLLWGDL), 97-117 (YVWVVLFVLGSFGLIGFIDDY), 132-152 (WKYLLQSLAALLIAVYLYASA), 168-188 (VMPQLGGFFIVLVYFTIVGSS), 199-219 (GLAIMPTVMVAAAFALIAYLS), 236-256 (AGELVIVCTAIVGAGLGFLWF), 263-283 (VFMGDVGSLSLGAALGTIAVL), 288-308 (ILLVIMGGVFVMETVSVILQV), and 338-358 (VIVRFWIISLFLVLLGLATLK).

It belongs to the glycosyltransferase 4 family. MraY subfamily. It depends on Mg(2+) as a cofactor.

Its subcellular location is the cell inner membrane. It carries out the reaction UDP-N-acetyl-alpha-D-muramoyl-L-alanyl-gamma-D-glutamyl-meso-2,6-diaminopimeloyl-D-alanyl-D-alanine + di-trans,octa-cis-undecaprenyl phosphate = di-trans,octa-cis-undecaprenyl diphospho-N-acetyl-alpha-D-muramoyl-L-alanyl-D-glutamyl-meso-2,6-diaminopimeloyl-D-alanyl-D-alanine + UMP. Its pathway is cell wall biogenesis; peptidoglycan biosynthesis. Catalyzes the initial step of the lipid cycle reactions in the biosynthesis of the cell wall peptidoglycan: transfers peptidoglycan precursor phospho-MurNAc-pentapeptide from UDP-MurNAc-pentapeptide onto the lipid carrier undecaprenyl phosphate, yielding undecaprenyl-pyrophosphoryl-MurNAc-pentapeptide, known as lipid I. This is Phospho-N-acetylmuramoyl-pentapeptide-transferase from Shewanella halifaxensis (strain HAW-EB4).